A 253-amino-acid polypeptide reads, in one-letter code: Small ribosomal subunit protein uS5 (253 aa).

The segment at 1 to 30 (MAESAPRGFGRGGRGGRGRGRGRRGAKRDE) is disordered. Over residues 14–26 (RGGRGRGRGRRGA) the composition is skewed to basic residues. Residues 75–138 (LNDEVMKVVP…IMGKLSIMPI (64 aa)) form the S5 DRBM domain.

This sequence belongs to the universal ribosomal protein uS5 family. As to quaternary structure, component of the small ribosomal subunit (SSU). Mature yeast ribosomes consist of a small (40S) and a large (60S) subunit. The 40S small subunit contains 1 molecule of ribosomal RNA (18S rRNA) and at least 33 different proteins. The large 60S subunit contains 3 rRNA molecules (25S, 5.8S and 5S rRNA) and at least 46 different proteins. Interacts with snoRNA U3. Interacts with MPP10. Component of the ribosomal small subunit (SSU) processome composed of at least 40 protein subunits and snoRNA U3.

The protein localises to the cytoplasm. Component of the ribosome, a large ribonucleoprotein complex responsible for the synthesis of proteins in the cell. The small ribosomal subunit (SSU) binds messenger RNAs (mRNAs) and translates the encoded message by selecting cognate aminoacyl-transfer RNA (tRNA) molecules. The large subunit (LSU) contains the ribosomal catalytic site termed the peptidyl transferase center (PTC), which catalyzes the formation of peptide bonds, thereby polymerizing the amino acids delivered by tRNAs into a polypeptide chain. The nascent polypeptides leave the ribosome through a tunnel in the LSU and interact with protein factors that function in enzymatic processing, targeting, and the membrane insertion of nascent chains at the exit of the ribosomal tunnel. Plays a role in the assembly and function of the 40S ribosomal subunit. Mutations in this protein affects the control of translational fidelity. Involved in nucleolar processing of pre-18S ribosomal RNA and ribosome assembly. Functionally, component of the ribosome, a large ribonucleoprotein complex responsible for the synthesis of proteins in the cell. The small ribosomal subunit (SSU) binds messenger RNAs (mRNAs) and translates the encoded message by selecting cognate aminoacyl-transfer RNA (tRNA) molecules. The large subunit (LSU) contains the ribosomal catalytic site termed the peptidyl transferase center (PTC), which catalyzes the formation of peptide bonds, thereby polymerizing the amino acids delivered by tRNAs into a polypeptide chain. The nascent polypeptides leave the ribosome through a tunnel in the LSU and interact with protein factors that function in enzymatic processing, targeting, and the membrane insertion of nascent chains at the exit of the ribosomal tunnel. uS5 is important for the assembly and function of the 40S ribosomal subunit. Mutations in this protein affects the control of translational fidelity. Involved in nucleolar processing of pre-18S ribosomal RNA and ribosome assembly. The protein is Small ribosomal subunit protein uS5 (rps2) of Schizosaccharomyces pombe (strain 972 / ATCC 24843) (Fission yeast).